The following is a 302-amino-acid chain: 33 kDa chaperonin (302 aa).

2 disulfides stabilise this stretch: C255–C257 and C288–C291.

The protein belongs to the HSP33 family. Under oxidizing conditions two disulfide bonds are formed involving the reactive cysteines. Under reducing conditions zinc is bound to the reactive cysteines and the protein is inactive.

It localises to the cytoplasm. Redox regulated molecular chaperone. Protects both thermally unfolding and oxidatively damaged proteins from irreversible aggregation. Plays an important role in the bacterial defense system toward oxidative stress. The polypeptide is 33 kDa chaperonin (Caulobacter vibrioides (strain ATCC 19089 / CIP 103742 / CB 15) (Caulobacter crescentus)).